Here is a 268-residue protein sequence, read N- to C-terminus: Dioscorin DB3S (268 aa).

Positions 25 to 259 (DEFSYIEGNP…TNFRSVFYFE (235 aa)) constitute an Alpha-carbonic anhydrase domain. An intrachain disulfide couples Cys-50 to Cys-209. His-91 acts as the Proton acceptor in catalysis. Residues Asp-92, 117-119 (HFH), Gln-136, and 205-206 (TA) each bind L-ascorbate.

Belongs to the alpha-class carbonic anhydrase family. As to quaternary structure, monomer. Homodimer. Not glycosylated. In terms of tissue distribution, expressed in tuber (at protein level).

It carries out the reaction hydrogencarbonate + H(+) = CO2 + H2O. The catalysed reaction is 2 monodehydro-L-ascorbate radical + NADH + H(+) = 2 L-ascorbate + NAD(+). Storage protein of tuber. Involved in protection against oxidative stress. Has carbonate dehydratase and weak trypsin inhibitor activity detected by measuring the dehydration of sodium bicarbonate and the inhibition of trypsin-catalyzed hydrolysis of N-benzoyl-L-arginine-4-nitro anilide, respectively. Contrarily, no carbonate dehydratase or trypsin inhibitor activity detected by measuring the hydrolysis of 4-nitrophenyl acetate or the inhibition of bovine trypsin-catalyzed hydrolysis of N-benzoyl-L-arginine ethyl ester, respectively. Has dehydroascorbate (DHA) reductase and monodehydroascorbate (MDA) reductase activities. Catalyzes the reactions of carbonate dehydratase and DHA reductase independently of zinc and glutathione (GSH). The coupled reaction is capable of recycling a plant antioxidant ascorbate using ubiquitous compounds H(2)O and CO(2). Exhibits antioxidant activity. Able to scavenge 1,1-diphenyl-2-picrylhydrazyl (DPPH) radical and hydroxyl radicals. Exhibits immunomodulatory activity. Activates Toll-like receptor 4 signaling pathways by up-regulating the gene expression of pro-inflammatory cytokines, such as tumor necrosis factor alpha, interleukin-1 beta and interleukin-6, and chemokines RANTES and MCP-1, in mouse RAW 264.7 macrophages. Stimulates the phagocytosis of E.coli by the LPS-treated mouse macrophages. This is Dioscorin DB3S from Dioscorea polystachya (Chinese yam).